A 271-amino-acid polypeptide reads, in one-letter code: Ribonuclease 3 (271 aa).

An RNase III domain is found at 5–139 (PALLELKLDY…IMAAIYLDGG (135 aa)). Mg(2+) is bound at residue glutamate 52. Aspartate 56 is a catalytic residue. 2 residues coordinate Mg(2+): aspartate 125 and glutamate 128. The active site involves glutamate 128. Residues 172–241 (NFKSALQELA…ARGLYERLMG (70 aa)) form the DRBM domain. The segment at 241–271 (GDPIVPLPDDSPGDSPDDSGDAAESGVISAT) is disordered. A compositionally biased stretch (acidic residues) spans 251-261 (SPGDSPDDSGD).

This sequence belongs to the ribonuclease III family. In terms of assembly, homodimer. It depends on Mg(2+) as a cofactor.

Its subcellular location is the cytoplasm. The enzyme catalyses Endonucleolytic cleavage to 5'-phosphomonoester.. Digests double-stranded RNA. Involved in the processing of primary rRNA transcript to yield the immediate precursors to the large and small rRNAs (23S and 16S). Processes some mRNAs, and tRNAs when they are encoded in the rRNA operon. Processes pre-crRNA and tracrRNA of type II CRISPR loci if present in the organism. This is Ribonuclease 3 from Solibacter usitatus (strain Ellin6076).